The following is a 670-amino-acid chain: FAD-binding monooxygenase ausC (670 aa).

FAD-binding positions include 144 to 147, 156 to 157, and tyrosine 162; these read TWYW and DT. 154–156 serves as a coordination point for NADP(+); it reads MCD. Residues 299 to 305 and 322 to 323 contribute to the NADP(+) site; these read TGASAVQ and RT.

The protein belongs to the FAD-binding monooxygenase family. FAD is required as a cofactor.

It carries out the reaction preaustinoid A + AH2 + O2 = preaustinoid A1 + A + H2O. It functions in the pathway secondary metabolite biosynthesis; terpenoid biosynthesis. Functionally, FAD-binding monooxygenase; part of the gene cluster that mediates the biosynthesis of calidodehydroaustin, a fungal meroterpenoid. The first step of the pathway is the synthesis of 3,5-dimethylorsellinic acid by the polyketide synthase ausA. 3,5-dimethylorsellinic acid is then prenylated by the polyprenyl transferase ausN. Further epoxidation by the FAD-dependent monooxygenase ausM and cyclization by the probable terpene cyclase ausL lead to the formation of protoaustinoid A. Protoaustinoid A is then oxidized to spiro-lactone preaustinoid A3 by the combined action of the FAD-binding monooxygenases ausB and ausC, and the dioxygenase ausE. Acid-catalyzed keto-rearrangement and ring contraction of the tetraketide portion of preaustinoid A3 by ausJ lead to the formation of preaustinoid A4. The aldo-keto reductase ausK, with the help of ausH, is involved in the next step by transforming preaustinoid A4 into isoaustinone which is in turn hydroxylated by the P450 monooxygenase ausI to form austinolide. The cytochrome P450 monooxygenase ausG modifies austinolide to austinol. Austinol is further acetylated to austin by the O-acetyltransferase ausP, which spontaneously changes to dehydroaustin. The cytochrome P450 monooxygenase ausR then converts dehydroaustin is into 7-dehydrodehydroaustin. The hydroxylation catalyzed by ausR permits the O-acetyltransferase ausQ to add an additional acetyl group to the molecule, leading to the formation of acetoxydehydroaustin. The short chain dehydrogenase ausT catalyzes the reduction of the double bond present between carbon atoms 1 and 2 to convert 7-dehydrodehydroaustin into 1,2-dihydro-7-hydroxydehydroaustin. AusQ catalyzes not only an acetylation reaction but also the addition of the PKS ausV diketide product to 1,2-dihydro-7-hydroxydehydroaustin, forming precalidodehydroaustin. Finally, the iron/alpha-ketoglutarate-dependent dioxygenase converts precalidodehydroaustin into calidodehydroaustin. The chain is FAD-binding monooxygenase ausC from Aspergillus calidoustus.